We begin with the raw amino-acid sequence, 461 residues long: MNKFKFFIVFLILSLVFLQNEYAFGSSLNEELSYYSVEYDNAKTFKESIKQKNIELTYKIPELHTAQIKTSKSKLNSLIKSNKNVKFVNPTCSTCVVEKSVKTGKNLNNKKNGSHDLFDRQWDMRKITNEGKSYKLSPDRKKAKVALVDSGVNSSHTDLKSINKIVNEVPKNGFRGSENDESGNKNFEEDKLNHGTLVAGQIGANGNLKGVNPGVEMNVYRVFGSKKSEMLWVSKGIIDAANDDNDVINVSLGNYLIKDNQNKKKLRDDEKVDYDALQKAINYAQKKGSIVVAAVGNDGINVKKVKEINKKRNLNSKTSKKVYDSPANLNNVMTVGSIDDNDYISEFSNYGNNFIDLMTIGGSYKLLDKYGKDAWLEKGYMQKQSVLSTSSNGRYIYQSGTSLAAPKVSGALALEIDKYQLKDQPETAIELFKKKGIEKEKYMDKKHYGNGKLDVYKLLKE.

A signal peptide spans 1–23 (MNKFKFFIVFLILSLVFLQNEYA). The Peptidase S8 domain occupies 121–459 (QWDMRKITNE…NGKLDVYKLL (339 aa)). Residues Asp-149, His-194, and Ser-402 each act as charge relay system in the active site.

The protein belongs to the peptidase S8 family.

It participates in antibiotic biosynthesis; epidermin biosynthesis. Its function is as follows. Protease which cleaves the matured lantibiotic from the modified prepeptide. This chain is Epidermin leader peptide-processing serine protease EpiP (epiP), found in Staphylococcus epidermidis.